Reading from the N-terminus, the 187-residue chain is Ribosome-recycling factor (187 aa).

The protein belongs to the RRF family.

It is found in the cytoplasm. In terms of biological role, responsible for the release of ribosomes from messenger RNA at the termination of protein biosynthesis. May increase the efficiency of translation by recycling ribosomes from one round of translation to another. The polypeptide is Ribosome-recycling factor (Rhodopseudomonas palustris (strain HaA2)).